A 206-amino-acid polypeptide reads, in one-letter code: Putative transporter protein AmiS2 (206 aa).

The next 7 membrane-spanning stretches (helical) occupy residues 4-24 (VGLL…LGTV), 29-49 (ASVL…VMLI), 56-76 (SAVL…YVGI), 86-106 (GIGW…FLSF), 113-133 (VFGV…LVLG), 142-162 (FTGW…AFLI), and 173-193 (VAAG…ILAA).

Belongs to the AmiS/UreI family.

The protein localises to the cell membrane. Its function is as follows. Possible transporter that might be responsible for the adsorption of amidase substrates or release of their hydrolysis products. The chain is Putative transporter protein AmiS2 (amiS2) from Rhodococcus erythropolis (Arthrobacter picolinophilus).